A 232-amino-acid chain; its full sequence is Orotate phosphoribosyltransferase (232 aa).

A 5-phospho-alpha-D-ribose 1-diphosphate-binding site is contributed by K28. 36–37 (FF) provides a ligand contact to orotate. 5-phospho-alpha-D-ribose 1-diphosphate-binding positions include 78–79 (YK), R108, K109, K112, H114, and 134–142 (DDVITAGTA). Orotate is bound by residues T138 and R166.

The protein belongs to the purine/pyrimidine phosphoribosyltransferase family. PyrE subfamily. As to quaternary structure, homodimer.

The catalysed reaction is orotidine 5'-phosphate + diphosphate = orotate + 5-phospho-alpha-D-ribose 1-diphosphate. It participates in pyrimidine metabolism; UMP biosynthesis via de novo pathway; UMP from orotate: step 1/2. Its function is as follows. Catalyzes the transfer of a ribosyl phosphate group from 5-phosphoribose 1-diphosphate to orotate, leading to the formation of orotidine monophosphate (OMP). This chain is Orotate phosphoribosyltransferase (URA5), found in Sordaria macrospora.